The chain runs to 73 residues: uncharacterized protein (73 aa).

This is an uncharacterized protein from Ureaplasma parvum serovar 3 (strain ATCC 700970).